The following is a 125-amino-acid chain: Small ribosomal subunit protein bS16 (125 aa).

A disordered region spans residues 87–125; sequence EGKKKQALARQSASKKAVKEKTEESKGSEVDSETSTSAD. Residues 103–115 show a composition bias toward basic and acidic residues; sequence AVKEKTEESKGSE.

It belongs to the bacterial ribosomal protein bS16 family.

The chain is Small ribosomal subunit protein bS16 from Prochlorococcus marinus (strain MIT 9211).